The sequence spans 284 residues: Tetraspanin-10 (284 aa).

Residues M1–R11 lie on the Cytoplasmic side of the membrane. A helical membrane pass occupies residues W12–S32. The Extracellular portion of the chain corresponds to T33–T43. Residues F44–A64 form a helical membrane-spanning segment. The Cytoplasmic segment spans residues C65–Y75. A helical transmembrane segment spans residues L76–V96. At T97 to E228 the chain is on the extracellular side. Residues N99, N128, and N183 are each glycosylated (N-linked (GlcNAc...) asparagine). A helical transmembrane segment spans residues W229 to S249. Residues T250 to F284 are Cytoplasmic-facing.

It belongs to the tetraspanin (TM4SF) family.

It is found in the membrane. May be involved in the regulation of cell differentiation. This chain is Tetraspanin-10 (TET10), found in Arabidopsis thaliana (Mouse-ear cress).